Here is a 553-residue protein sequence, read N- to C-terminus: Arginine--tRNA ligase (553 aa).

A 'HIGH' region motif is present at residues 122-132 (ANPTGFLHVGH).

The protein belongs to the class-I aminoacyl-tRNA synthetase family. As to quaternary structure, monomer.

Its subcellular location is the cytoplasm. The enzyme catalyses tRNA(Arg) + L-arginine + ATP = L-arginyl-tRNA(Arg) + AMP + diphosphate. This is Arginine--tRNA ligase from Mesoplasma florum (strain ATCC 33453 / NBRC 100688 / NCTC 11704 / L1) (Acholeplasma florum).